A 232-amino-acid polypeptide reads, in one-letter code: Flavin-dependent thymidylate synthase (232 aa).

Residues 1–204 enclose the ThyX domain; it reads MKIALLQHTP…PTIFRDAGPG (204 aa). FAD-binding positions include S55, 79-81, and Q87; that span reads RHR. DUMP contacts are provided by residues 76–79, 87–91, and R143; these read QLVR and QQSQR. A ThyX motif motif is present at residues 79–89; that stretch reads RHRIASYSQQS. FAD-binding positions include 159–161 and H165; that span reads NAR. A dUMP-binding site is contributed by R170. The active-site Involved in ionization of N3 of dUMP, leading to its activation is the R170.

It belongs to the thymidylate synthase ThyX family. As to quaternary structure, homotetramer. FAD is required as a cofactor.

The enzyme catalyses dUMP + (6R)-5,10-methylene-5,6,7,8-tetrahydrofolate + NADPH + H(+) = dTMP + (6S)-5,6,7,8-tetrahydrofolate + NADP(+). Its pathway is pyrimidine metabolism; dTTP biosynthesis. Functionally, catalyzes the reductive methylation of 2'-deoxyuridine-5'-monophosphate (dUMP) to 2'-deoxythymidine-5'-monophosphate (dTMP) while utilizing 5,10-methylenetetrahydrofolate (mTHF) as the methyl donor, and NADPH and FADH(2) as the reductant. This is Flavin-dependent thymidylate synthase from Geobacter sulfurreducens (strain ATCC 51573 / DSM 12127 / PCA).